A 1089-amino-acid polypeptide reads, in one-letter code: Pentatricopeptide repeat-containing protein MRL1, chloroplastic (1089 aa).

The N-terminal 72 residues, 1–72 (MEVTSTTFIS…SIRSPRLVVR (72 aa)), are a transit peptide targeting the chloroplast. PPR repeat units follow at residues 466 to 500 (TMSTFNMLMSVCASSQDIEGARGVLRLVQESGMTA), 501 to 535 (DCKLYTTLISSCAKSGKVDAMFEVFHQMSNSGVEA), 536 to 570 (NLHTFGALIDGCARAGQVAKAFGAYGILRSKNVKP), 571 to 605 (DRVVFNALISACGQSGAVDRAFDVLAEMKAETHPI), 608 to 642 (DHISIGALMKACCNAGQVERAKEVYQMIHKYGIRG), 643 to 677 (TPEVYTIAVNSCSKSGDWDFACSIYKDMKEKDVTP), 678 to 712 (DEVFFSALIDVAGHAKMLDEAFGILQDAKSQGIRL), 713 to 747 (GTISYSSLMGACCNAKDWKKALELYEKIKSIKLRP), 748 to 782 (TISTMNALITALCEGNQLPKAMEYLDEIKTLGLKP), and 783 to 817 (NTITYSMLMLASERKDDFEVSFKLLSQAKGDGVSP).

It belongs to the PPR family. P subfamily. In terms of tissue distribution, expressed in stems, leaves and sepals.

It is found in the plastid. The protein localises to the chloroplast. In terms of biological role, regulator of the large subunit (LS) of RuBisCO. Involved either in the processing or in the stabilization of the processed transcript, probably by acting as a barrier to the 5'&gt;3' degradation. The chain is Pentatricopeptide repeat-containing protein MRL1, chloroplastic (MRL1) from Arabidopsis thaliana (Mouse-ear cress).